Consider the following 274-residue polypeptide: Merozoite surface protein 2 (274 aa).

The N-terminal stretch at 1-20 (MKVIKTLSIINFFIFVTFNI) is a signal peptide. Residues Asn22 and Asn36 are each glycosylated (N-linked (GlcNAc...) asparagine). Residues 43 to 234 (MAESKPPTGT…SDSQKECTDG (192 aa)) form a disordered region. The tract at residues 44 to 200 (AESKPPTGTG…EQTESPELQS (157 aa)) is polymorphic region. Tandem repeats lie at residues 53-62 (GASGSAGSGA) and 63-72 (GASGSAGSGD). Residues 53 to 72 (GASGSAGSGAGASGSAGSGD) are 2 X 10 AA tandem repeats of G-A-S-G-S-A-G-S-G-[AD]. The segment covering 53–72 (GASGSAGSGAGASGSAGSGD) has biased composition (gly residues). Over residues 91 to 121 (SSSTPATTTTTTTTTTTTTTNDAEASTSTSS) the composition is skewed to low complexity. Composition is skewed to polar residues over residues 122-131 (ENPNHNNAET), 140-167 (QKSNQANKETQNNSNVQQDSQTKSNVPP), and 174-202 (KSPTAQPEQAENSAPTAEQTESPELQSAP). Asn151 carries N-linked (GlcNAc...) asparagine glycosylation. N-linked (GlcNAc...) asparagine glycosylation is present at Asn223. The cysteines at positions 231 and 239 are disulfide-linked. Asn248 carries an N-linked (GlcNAc...) asparagine glycan. A lipid anchor (GPI-anchor amidated asparagine) is attached at Asn248. Positions 249-274 (SSNIASINKFVVLISAKLVLSFAIFI) are cleaved as a propeptide — removed in mature form.

It is found in the cell membrane. In terms of biological role, may play a role in the merozoite attachment to the erythrocyte. The polypeptide is Merozoite surface protein 2 (Plasmodium falciparum (isolate kf1916)).